Here is a 196-residue protein sequence, read N- to C-terminus: 3-isopropylmalate dehydratase small subunit (196 aa).

Belongs to the LeuD family. LeuD type 1 subfamily. In terms of assembly, heterodimer of LeuC and LeuD.

The catalysed reaction is (2R,3S)-3-isopropylmalate = (2S)-2-isopropylmalate. The protein operates within amino-acid biosynthesis; L-leucine biosynthesis; L-leucine from 3-methyl-2-oxobutanoate: step 2/4. Functionally, catalyzes the isomerization between 2-isopropylmalate and 3-isopropylmalate, via the formation of 2-isopropylmaleate. This Streptococcus gordonii (strain Challis / ATCC 35105 / BCRC 15272 / CH1 / DL1 / V288) protein is 3-isopropylmalate dehydratase small subunit.